Reading from the N-terminus, the 458-residue chain is UDP-N-acetylmuramate--L-alanine ligase (458 aa).

118–124 lines the ATP pocket; sequence GTHGKTT.

The protein belongs to the MurCDEF family.

It localises to the cytoplasm. It carries out the reaction UDP-N-acetyl-alpha-D-muramate + L-alanine + ATP = UDP-N-acetyl-alpha-D-muramoyl-L-alanine + ADP + phosphate + H(+). It participates in cell wall biogenesis; peptidoglycan biosynthesis. In terms of biological role, cell wall formation. The polypeptide is UDP-N-acetylmuramate--L-alanine ligase (Clostridium acetobutylicum (strain ATCC 824 / DSM 792 / JCM 1419 / IAM 19013 / LMG 5710 / NBRC 13948 / NRRL B-527 / VKM B-1787 / 2291 / W)).